Consider the following 152-residue polypeptide: UPF0756 membrane protein PEPE_1090 (152 aa).

4 helical membrane passes run Trp-4–Ile-24, Trp-52–Phe-72, Trp-85–Leu-105, and Leu-115–Ile-135.

Belongs to the UPF0756 family.

It is found in the cell membrane. This is UPF0756 membrane protein PEPE_1090 from Pediococcus pentosaceus (strain ATCC 25745 / CCUG 21536 / LMG 10740 / 183-1w).